The primary structure comprises 466 residues: cAMP-dependent protein kinase regulatory subunit (466 aa).

Residues 25–231 are dimerization and phosphorylation; sequence QFAANYFTKR…RLEKAVGKNF (207 aa). The span at 71–80 shows a compositional bias: low complexity; it reads ASLSHGSSKA. Disordered regions lie at residues 71 to 90, 109 to 139, 154 to 179, and 193 to 218; these read ASLSHGSSKANASQSGISSS, STHIVDHLDSTHSNTTASPAKASGGDAPGIF, NSSVDPMAPEPTATTHSFPRRSVVNP, and SVSGETLQPDHLDDWKPENFQEKSPE. The segment covering 81–90 has biased composition (polar residues); that stretch reads NASQSGISSS. Over residues 109 to 118 the composition is skewed to basic and acidic residues; sequence STHIVDHLDS. Residue Ser193 is modified to Phosphoserine. Over residues 200-218 the composition is skewed to basic and acidic residues; that stretch reads QPDHLDDWKPENFQEKSPE. Residues 232-347, Glu297, Arg306, 350-466, Glu416, and Arg425 each bind 3',5'-cyclic AMP; these read LFNK…LLKN and ILKS…RSKH.

This sequence belongs to the cAMP-dependent kinase regulatory chain family. In terms of assembly, tetramer, composed of 2 regulatory (R) and 2 catalytic (C) subunits. In the presence of cAMP it dissociates into 2 active monomeric C subunits and an R dimer.

This chain is cAMP-dependent protein kinase regulatory subunit (PKAR), found in Kluyveromyces lactis (strain ATCC 8585 / CBS 2359 / DSM 70799 / NBRC 1267 / NRRL Y-1140 / WM37) (Yeast).